Here is a 143-residue protein sequence, read N- to C-terminus: MIRKKKKVKKIRGSRTCGGGSHKKRRGAGNKGGRGMAGGHKHKWTWIIKYCPDYFGKYGFKRHPSLVKRLETINVGELEEIVLKNPDKFEKEDDKFVVDVIELGYEKVLGKGKVTIPMIVKAVEVSEKAREKIEAVGGEVVEL.

A compositionally biased stretch (basic residues) spans 1–13 (MIRKKKKVKKIRG). The tract at residues 1-39 (MIRKKKKVKKIRGSRTCGGGSHKKRRGAGNKGGRGMAGG) is disordered. The segment covering 29–38 (GNKGGRGMAG) has biased composition (gly residues).

The protein belongs to the universal ribosomal protein uL15 family. Part of the 50S ribosomal subunit.

Binds to the 23S rRNA. The protein is Large ribosomal subunit protein uL15 of Methanocaldococcus jannaschii (strain ATCC 43067 / DSM 2661 / JAL-1 / JCM 10045 / NBRC 100440) (Methanococcus jannaschii).